Here is a 910-residue protein sequence, read N- to C-terminus: Protein translocase subunit SecA (910 aa).

Residues Gln87, 105–109, and Asp508 each bind ATP; that span reads GEGKT. The disordered stretch occupies residues 848-910; that stretch reads RLSQSQFQHQ…KYKHCHGQLS (63 aa). Over residues 869-880 the composition is skewed to low complexity; it reads AQVQAAQQGVAQ. The Zn(2+) site is built by Cys894, Cys896, Cys905, and His906. Residues 900 to 910 are compositionally biased toward basic residues; that stretch reads KKYKHCHGQLS.

Belongs to the SecA family. In terms of assembly, monomer and homodimer. Part of the essential Sec protein translocation apparatus which comprises SecA, SecYEG and auxiliary proteins SecDF-YajC and YidC. It depends on Zn(2+) as a cofactor.

The protein resides in the cell inner membrane. It localises to the cytoplasm. The catalysed reaction is ATP + H2O + cellular proteinSide 1 = ADP + phosphate + cellular proteinSide 2.. Functionally, part of the Sec protein translocase complex. Interacts with the SecYEG preprotein conducting channel. Has a central role in coupling the hydrolysis of ATP to the transfer of proteins into and across the cell membrane, serving both as a receptor for the preprotein-SecB complex and as an ATP-driven molecular motor driving the stepwise translocation of polypeptide chains across the membrane. The sequence is that of Protein translocase subunit SecA from Stenotrophomonas maltophilia (strain K279a).